A 186-amino-acid chain; its full sequence is dTTP/UTP pyrophosphatase (186 aa).

The Proton acceptor role is filled by Asp-67.

Belongs to the Maf family. YhdE subfamily. Requires a divalent metal cation as cofactor.

It is found in the cytoplasm. The enzyme catalyses dTTP + H2O = dTMP + diphosphate + H(+). It carries out the reaction UTP + H2O = UMP + diphosphate + H(+). Functionally, nucleoside triphosphate pyrophosphatase that hydrolyzes dTTP and UTP. May have a dual role in cell division arrest and in preventing the incorporation of modified nucleotides into cellular nucleic acids. In Carboxydothermus hydrogenoformans (strain ATCC BAA-161 / DSM 6008 / Z-2901), this protein is dTTP/UTP pyrophosphatase.